A 446-amino-acid chain; its full sequence is MENISDLWNSALKELEKKVSKPSYETWLKSTTAHNLKKDVLTITAPNEFARDWLESHYSELISETLYDLTGAKLAIRFIIPQSQAEEDIDLPPVKPNPAQDDSAHLPQSMLNPKYTFDTFVIGSGNRFAHAASLAVAEAPAKAYNPLFIYGGVGLGKTHLMHAIGHYVIEHNPNAKVVYLSSEKFTNEFINSIRDNKAVDFRNKYRNVDVLLIDDIQFLAGKEQTQEEFFHTFNALHEESKQIVISSDRPPKEIPTLEDRLRSRFEWGLITDITPPDLETRIAILRKKAKAEGLDIPNEVMLYIANQIDSNIRELEGALIRVVAYSSLINKDINADLAAEALKDIIPNSKPKIISIYDIQKAVGDVYQVKLEDFKAKKRTKSVAFPRQIAMYLSRELTDSSLPKIGEEFGGRDHTTVIHAHEKISKLLKTDTQLQKQVEEINGILK.

A domain I, interacts with DnaA modulators region spans residues 1–81 (MENISDLWNS…AKLAIRFIIP (81 aa)). Residues 81 to 109 (PQSQAEEDIDLPPVKPNPAQDDSAHLPQS) are domain II. The domain III, AAA+ region stretch occupies residues 110-326 (MLNPKYTFDT…GALIRVVAYS (217 aa)). ATP-binding residues include Gly154, Gly156, Lys157, and Thr158. Residues 327 to 446 (SLINKDINAD…QVEEINGILK (120 aa)) form a domain IV, binds dsDNA region.

It belongs to the DnaA family. Oligomerizes as a right-handed, spiral filament on DNA at oriC.

The protein localises to the cytoplasm. Its function is as follows. Plays an essential role in the initiation and regulation of chromosomal replication. ATP-DnaA binds to the origin of replication (oriC) to initiate formation of the DNA replication initiation complex once per cell cycle. Binds the DnaA box (a 9 base pair repeat at the origin) and separates the double-stranded (ds)DNA. Forms a right-handed helical filament on oriC DNA; dsDNA binds to the exterior of the filament while single-stranded (ss)DNA is stabiized in the filament's interior. The ATP-DnaA-oriC complex binds and stabilizes one strand of the AT-rich DNA unwinding element (DUE), permitting loading of DNA polymerase. After initiation quickly degrades to an ADP-DnaA complex that is not apt for DNA replication. Binds acidic phospholipids. The sequence is that of Chromosomal replication initiator protein DnaA from Bacillus cereus (strain B4264).